The primary structure comprises 365 residues: Peptide chain release factor 2 (365 aa).

An N5-methylglutamine modification is found at glutamine 252.

The protein belongs to the prokaryotic/mitochondrial release factor family. Post-translationally, methylated by PrmC. Methylation increases the termination efficiency of RF2.

The protein localises to the cytoplasm. Its function is as follows. Peptide chain release factor 2 directs the termination of translation in response to the peptide chain termination codons UGA and UAA. This Aliivibrio fischeri (strain ATCC 700601 / ES114) (Vibrio fischeri) protein is Peptide chain release factor 2.